Reading from the N-terminus, the 884-residue chain is Telomerase reverse transcriptase (884 aa).

The Reverse transcriptase domain maps to 422–725 (CRNHNSYTLS…TVIQFCAMHI (304 aa)). Asp530, Asp670, and Asp671 together coordinate Mg(2+).

It belongs to the reverse transcriptase family. Telomerase subfamily. In terms of assembly, catalytic subunit of the telomerase holoenzyme complex composed minimally of EST2 and the telomerase RNA template component.

Its subcellular location is the nucleus. The protein localises to the chromosome. It is found in the telomere. It catalyses the reaction DNA(n) + a 2'-deoxyribonucleoside 5'-triphosphate = DNA(n+1) + diphosphate. Functionally, telomerase is a ribonucleoprotein enzyme essential for the replication of chromosome termini in most eukaryotes. It elongates telomeres. It is a reverse transcriptase that adds simple sequence repeats to chromosome ends by copying a template sequence within the RNA component of the enzyme. The polypeptide is Telomerase reverse transcriptase (EST2) (Saccharomyces cerevisiae (strain ATCC 204508 / S288c) (Baker's yeast)).